Consider the following 164-residue polypeptide: Sorting nexin-3 (164 aa).

The tract at residues 1-26 (MSGKREFKSFGSTEETMFSQHHKIPS) is disordered. The segment covering 10–26 (FGSTEETMFSQHHKIPS) has biased composition (polar residues). The 124-residue stretch at 40 to 163 (IEVRNPKTHV…IRFIEDDKFV (124 aa)) folds into the PX domain. A 1,2-diacyl-sn-glycero-3-phospho-(1D-myo-inositol-3-phosphate) is bound by residues Arg83, Ser85, Lys114, Arg120, and Arg129.

The protein belongs to the sorting nexin family.

The protein resides in the cytoplasm. It is found in the golgi apparatus membrane. Its subcellular location is the prevacuolar compartment membrane. Functionally, required for retention of late Golgi membrane proteins. Component of the retrieval machinery that functions by direct interaction with the cytosolic tails of certain TGN membrane proteins during the sorting/budding process at the prevacuolar compartment. Binds phosphatidylinositol 3-phosphate (PtdIns(P3)). This is Sorting nexin-3 (SNX3) from Candida glabrata (strain ATCC 2001 / BCRC 20586 / JCM 3761 / NBRC 0622 / NRRL Y-65 / CBS 138) (Yeast).